The chain runs to 255 residues: Imidazole glycerol phosphate synthase subunit HisF (255 aa).

Residues aspartate 12 and aspartate 131 contribute to the active site.

This sequence belongs to the HisA/HisF family. As to quaternary structure, heterodimer of HisH and HisF.

The protein localises to the cytoplasm. It carries out the reaction 5-[(5-phospho-1-deoxy-D-ribulos-1-ylimino)methylamino]-1-(5-phospho-beta-D-ribosyl)imidazole-4-carboxamide + L-glutamine = D-erythro-1-(imidazol-4-yl)glycerol 3-phosphate + 5-amino-1-(5-phospho-beta-D-ribosyl)imidazole-4-carboxamide + L-glutamate + H(+). Its pathway is amino-acid biosynthesis; L-histidine biosynthesis; L-histidine from 5-phospho-alpha-D-ribose 1-diphosphate: step 5/9. Functionally, IGPS catalyzes the conversion of PRFAR and glutamine to IGP, AICAR and glutamate. The HisF subunit catalyzes the cyclization activity that produces IGP and AICAR from PRFAR using the ammonia provided by the HisH subunit. The sequence is that of Imidazole glycerol phosphate synthase subunit HisF from Neisseria gonorrhoeae (strain ATCC 700825 / FA 1090).